The sequence spans 194 residues: Superoxide dismutase [Cu-Zn] (194 aa).

The N-terminal stretch at 1 to 20 (MTRPLALIIFLVAILTNTDP) is a signal peptide. The Cu cation site is built by H85 and H104. A disulfide bridge connects residues C96 and C188. Zn(2+)-binding residues include H104, H112, H121, and D124. Residue H162 coordinates Cu cation.

Belongs to the Cu-Zn superoxide dismutase family. In terms of assembly, homodimer. Requires Cu cation as cofactor. Zn(2+) serves as cofactor.

It carries out the reaction 2 superoxide + 2 H(+) = H2O2 + O2. Its function is as follows. Destroys radicals which are normally produced within the cells and which are toxic to biological systems. The chain is Superoxide dismutase [Cu-Zn] from Ramazzottius varieornatus (Water bear).